Consider the following 403-residue polypeptide: Ribosomal RNA large subunit methyltransferase I (403 aa).

The PUA domain occupies 9–88; that stretch reads YPRLVLSKGR…ESIDIAFFTR (80 aa).

The protein belongs to the methyltransferase superfamily. RlmI family.

It localises to the cytoplasm. The enzyme catalyses cytidine(1962) in 23S rRNA + S-adenosyl-L-methionine = 5-methylcytidine(1962) in 23S rRNA + S-adenosyl-L-homocysteine + H(+). In terms of biological role, specifically methylates the cytosine at position 1962 (m5C1962) of 23S rRNA. The sequence is that of Ribosomal RNA large subunit methyltransferase I from Salmonella paratyphi A (strain ATCC 9150 / SARB42).